The following is a 277-amino-acid chain: Ribosomal RNA small subunit methyltransferase A (277 aa).

Asn27, Leu29, Gly54, Glu75, Asp95, and Asn118 together coordinate S-adenosyl-L-methionine.

It belongs to the class I-like SAM-binding methyltransferase superfamily. rRNA adenine N(6)-methyltransferase family. RsmA subfamily.

It is found in the cytoplasm. The catalysed reaction is adenosine(1518)/adenosine(1519) in 16S rRNA + 4 S-adenosyl-L-methionine = N(6)-dimethyladenosine(1518)/N(6)-dimethyladenosine(1519) in 16S rRNA + 4 S-adenosyl-L-homocysteine + 4 H(+). Its function is as follows. Specifically dimethylates two adjacent adenosines (A1518 and A1519) in the loop of a conserved hairpin near the 3'-end of 16S rRNA in the 30S particle. May play a critical role in biogenesis of 30S subunits. The sequence is that of Ribosomal RNA small subunit methyltransferase A from Chlamydia muridarum (strain MoPn / Nigg).